Here is a 262-residue protein sequence, read N- to C-terminus: Pyridoxine 5'-phosphate synthase (262 aa).

Residue N6 participates in 3-amino-2-oxopropyl phosphate binding. 8–9 (DH) contacts 1-deoxy-D-xylulose 5-phosphate. R17 contributes to the 3-amino-2-oxopropyl phosphate binding site. H43 functions as the Proton acceptor in the catalytic mechanism. 2 residues coordinate 1-deoxy-D-xylulose 5-phosphate: R45 and H50. E70 (proton acceptor) is an active-site residue. Residue T102 participates in 1-deoxy-D-xylulose 5-phosphate binding. H215 functions as the Proton donor in the catalytic mechanism. 3-amino-2-oxopropyl phosphate-binding positions include G216 and 237-238 (GH).

This sequence belongs to the PNP synthase family. In terms of assembly, homooctamer; tetramer of dimers.

It localises to the cytoplasm. The catalysed reaction is 3-amino-2-oxopropyl phosphate + 1-deoxy-D-xylulose 5-phosphate = pyridoxine 5'-phosphate + phosphate + 2 H2O + H(+). Its pathway is cofactor biosynthesis; pyridoxine 5'-phosphate biosynthesis; pyridoxine 5'-phosphate from D-erythrose 4-phosphate: step 5/5. Catalyzes the complicated ring closure reaction between the two acyclic compounds 1-deoxy-D-xylulose-5-phosphate (DXP) and 3-amino-2-oxopropyl phosphate (1-amino-acetone-3-phosphate or AAP) to form pyridoxine 5'-phosphate (PNP) and inorganic phosphate. In Helicobacter acinonychis (strain Sheeba), this protein is Pyridoxine 5'-phosphate synthase.